A 280-amino-acid chain; its full sequence is Meiotic spindle formation protein 2 (280 aa).

Residues 1–104 (MSGLDDRKKL…LPKSSPESSV (104 aa)) are disordered. The span at 72–92 (LHSESKKELSRNPVSRGEEHS) shows a compositional bias: basic and acidic residues. The segment covering 93 to 104 (SSLPKSSPESSV) has biased composition (low complexity).

As to quaternary structure, interacts with mei-1.

Its subcellular location is the cytoplasm. It is found in the cytoskeleton. It localises to the spindle pole. Functionally, forms a heterodimeric complex in conjunction with mei-1 which severs microtubules in vitro in an ATP-dependent manner. This activity may promote rapid reorganization of cellular microtubule arrays. May act to target mei-1 within the cell. Required specifically for meiotic spindle formation in the female germline. This is Meiotic spindle formation protein 2 (mei-2) from Caenorhabditis elegans.